Reading from the N-terminus, the 1205-residue chain is ATP-dependent DNA helicase MER3 homolog (1205 aa).

The Helicase ATP-binding domain occupies 41 to 236; it reads PACFLSDVNM…WLAVPSEGIK (196 aa). 54–61 contacts ATP; that stretch reads APTGSGKT. The short motif at 172–175 is the DEAH box element; it reads DEVH. The Helicase C-terminal domain maps to 266–467; it reads RLQSFIFDIL…CAVEHLNAEI (202 aa). An SEC63 domain is found at 541 to 852; that stretch reads PLEPGRLMTK…FEEYVGLDIH (312 aa). Residues 1075–1091 are compositionally biased toward polar residues; that stretch reads QKSEILNRTQGKNSTQL. Residues 1075 to 1131 are disordered; it reads QKSEILNRTQGKNSTQLAGKKAFEKSKTPDENSLHFVGKRDSSSEKSKALSKTPDEN. Positions 1095-1122 are enriched in basic and acidic residues; that stretch reads KAFEKSKTPDENSLHFVGKRDSSSEKSK.

Belongs to the helicase family. SKI2 subfamily. As to expression, transcribed preferentially in early stages of meiocyte development and during meiosis in young flowers.

The protein resides in the nucleus. It is found in the chromosome. It catalyses the reaction Couples ATP hydrolysis with the unwinding of duplex DNA by translocating in the 3'-5' direction.. It carries out the reaction ATP + H2O = ADP + phosphate + H(+). Its function is as follows. DNA helicase required for crossover formation, complete synapsis of homologous chromosomes and bivalent formation during meiosis. Is specific to recombination events resulting in interference-sensitive crossovers (class I meiotic crossover). Works cooperatively with ZIP4 to promote crossovers. The sequence is that of ATP-dependent DNA helicase MER3 homolog from Oryza sativa subsp. japonica (Rice).